The chain runs to 140 residues: Large ribosomal subunit protein uL11 (140 aa).

This sequence belongs to the universal ribosomal protein uL11 family. Part of the ribosomal stalk of the 50S ribosomal subunit. Interacts with L10 and the large rRNA to form the base of the stalk. L10 forms an elongated spine to which L12 dimers bind in a sequential fashion forming a multimeric L10(L12)X complex. In terms of processing, one or more lysine residues are methylated.

Functionally, forms part of the ribosomal stalk which helps the ribosome interact with GTP-bound translation factors. The protein is Large ribosomal subunit protein uL11 of Brachyspira hyodysenteriae (strain ATCC 49526 / WA1).